A 348-amino-acid polypeptide reads, in one-letter code: Ephrin-4 (348 aa).

Residues 1-20 form the signal peptide; the sequence is MKQFFEFLITTFLLLGLAAA. The 158-residue stretch at 21–178 folds into the Ephrin RBD domain; that stretch reads DEHIVYWNST…SQNMRLSMKV (158 aa). N-linked (GlcNAc...) asparagine glycosylation occurs at N28. 2 cysteine pairs are disulfide-bonded: C53–C91 and C79–C167. The N-linked (GlcNAc...) asparagine glycan is linked to N157. A disordered region spans residues 207–237; that stretch reads GGQEDEDSDNDNAHLLPRDLEGSTNPKFRRP. A lipid anchor (GPI-anchor amidated serine) is attached at S329. A propeptide spans 330 to 348 (removed in mature form); the sequence is STSLSTNFAILLAVIYVLY.

It belongs to the ephrin family. Interacts with lat-2. May undergo proteolysis by metalloprotease sup-17 to give rise to a soluble form.

It is found in the cell membrane. Regulates the formation or stabilization of cell-cell contacts at several stages of epithelial morphogenesis. In early embryonic development, involved in ventral closure of the epidermis. During male tail morphogenesis, regulates precursor cell sorting together with mab-20 and allows the formation of distinct sensory rays. Probably acts as a ligand for lad-2 to regulate axon guidance of several neurons including SDQL, SDQR, SMD and PLN neurons during neurogenesis. The sequence is that of Ephrin-4 (efn-4) from Caenorhabditis elegans.